The sequence spans 197 residues: MSNIDKQALREEFQYMQDHYSDPADRARQVIYIAAEALLDELDKKQQYIKLRDQEDEDIALTVGKLRVELEAAKKRMTEQSAIVAAAEKLVRCKGRYHSELNYRALAKLFGVITPDLPPLEHENVHYADAAEVEITALRQRIQELEAKLETDDKLQDGAFRDGLKAGFSYGQTDDQSGFTQCMSAYSTRAGIKVKGE.

It to phage lambda protein EA22.

The protein is Ead protein (ead) of Salmonella typhimurium (Bacteriophage P22).